Reading from the N-terminus, the 246-residue chain is Octanoyltransferase (246 aa).

Positions 54-240 (DPPPEAVWLL…CLEPNADAAI (187 aa)) constitute a BPL/LPL catalytic domain. Substrate contacts are provided by residues 96-103 (RGGEVTHH), 163-165 (AIG), and 176-178 (GVA). Cys-194 (acyl-thioester intermediate) is an active-site residue.

It belongs to the LipB family.

The protein localises to the cytoplasm. The catalysed reaction is octanoyl-[ACP] + L-lysyl-[protein] = N(6)-octanoyl-L-lysyl-[protein] + holo-[ACP] + H(+). The protein operates within protein modification; protein lipoylation via endogenous pathway; protein N(6)-(lipoyl)lysine from octanoyl-[acyl-carrier-protein]: step 1/2. Functionally, catalyzes the transfer of endogenously produced octanoic acid from octanoyl-acyl-carrier-protein onto the lipoyl domains of lipoate-dependent enzymes. Lipoyl-ACP can also act as a substrate although octanoyl-ACP is likely to be the physiological substrate. The chain is Octanoyltransferase from Synechococcus sp. (strain WH7803).